We begin with the raw amino-acid sequence, 237 residues long: Lectin alpha chain (237 aa).

Residues Glu8 and Asp10 each coordinate Mn(2+). Residues Asp10, Tyr12, Asn14, and Asp19 each coordinate Ca(2+). An a carbohydrate-binding site is contributed by Tyr12. Positions 19 and 24 each coordinate Mn(2+). Position 99-100 (99-100) interacts with a carbohydrate; sequence LY. Asp208 lines the Ca(2+) pocket. Arg228 provides a ligand contact to a carbohydrate.

Belongs to the leguminous lectin family. In terms of assembly, homotetramer. The beta and gamma chains are produced by partial proteolytic processing of the lectin alpha chain by an asparaginyl endopeptidase.

It localises to the vacuole. The protein resides in the aleurone grain. Functionally, D-mannose/D-glucose-binding lectin with hemagglutinating activity towards rabbit and human erythrocytes. In rats, elicits an acute inflammatory response by inducing neutrophil migration and induces dose-dependent paw edema. In Macropsychanthus wilsonii (Wilson's clusterpea), this protein is Lectin alpha chain.